We begin with the raw amino-acid sequence, 94 residues long: Putative testis-specific prion protein (94 aa).

An N-terminal signal peptide occupies residues M1–L18. N-linked (GlcNAc...) asparagine glycosylation is present at N44.

Specifically expressed in adult testis.

The protein resides in the secreted. The sequence is that of Putative testis-specific prion protein (PRNT) from Homo sapiens (Human).